Reading from the N-terminus, the 387-residue chain is Phosphoglycerate kinase (387 aa).

Substrate-binding positions include 21-23 (DLN), arginine 36, 59-62 (HLGR), arginine 114, and arginine 147. Residues lysine 198, glutamate 314, and 340 to 343 (GGDT) each bind ATP.

Belongs to the phosphoglycerate kinase family. As to quaternary structure, monomer.

The protein resides in the cytoplasm. The enzyme catalyses (2R)-3-phosphoglycerate + ATP = (2R)-3-phospho-glyceroyl phosphate + ADP. It participates in carbohydrate degradation; glycolysis; pyruvate from D-glyceraldehyde 3-phosphate: step 2/5. This is Phosphoglycerate kinase from Erwinia tasmaniensis (strain DSM 17950 / CFBP 7177 / CIP 109463 / NCPPB 4357 / Et1/99).